A 517-amino-acid chain; its full sequence is DNA-(apurinic or apyrimidinic site) endonuclease 2 (517 aa).

Residues N9 and E34 each coordinate Mg(2+). Positions 82–90 (EEGLSGVFC) match the Claspin-like CKB motif motif. Y142 is an active-site residue. Mg(2+) contacts are provided by D183, N185, D299, and H300. Residue D183 is the Proton donor/acceptor of the active site. H300 serves as the catalytic Proton acceptor. Positions 347 to 362 (GNTTEESSELTGTPSF) are enriched in polar residues. Positions 347 to 366 (GNTTEESSELTGTPSFTEGA) are disordered. The short motif at 395 to 402 (QGNLLSFF) is the PCNA interacting protein (PIP) box element. 4 residues coordinate Zn(2+): C463, H466, C489, and C503. Residues 463-512 (CKGHSEPCVLRTVKKAGPNCGRQFYVCARPEGHSSNPQARCNFFLWLTKK) form a GRF-type zinc finger.

The protein belongs to the DNA repair enzymes AP/ExoA family. In terms of assembly, interacts (via PIP box and GRF-type Zinc finger domain) with pcna; the interaction is required for 3 -5 SSB end resection, assembly of a checkpoint protein complex to SSB sites, and SSB signaling. Interacts with chek1. Mg(2+) is required as a cofactor. Requires Mn(2+) as cofactor. As to expression, expressed in eggs (at protein level).

The protein resides in the nucleus. Its subcellular location is the chromosome. The protein localises to the cytoplasm. It is found in the mitochondrion. The catalysed reaction is Exonucleolytic cleavage in the 3'- to 5'-direction to yield nucleoside 5'-phosphates.. With respect to regulation, 3'-5' nuclease activity is stimulated in presence of pcna. Functions as a weak apurinic/apyrimidinic (AP) endodeoxyribonuclease in the DNA base excision repair (BER) pathway of DNA lesions induced by oxidative and alkylating agents. Initiates repair of AP sites in DNA by catalyzing hydrolytic incision of the phosphodiester backbone immediately adjacent to the damage, generating a single-strand break with 5'-deoxyribose phosphate and 3'-hydroxyl ends. Exhibits 3'-5' exonuclease activity on a 3' DNA substrate; nuclease activity is stimulated by interaction with pcna. Has a preference for the 3' recessed ends over blunt-ended substrates, in both the presence and the absence of pcna. Generates single-stranded DNA (ssDNA) via 3'-5' single-strand break (SSB) end resection, thereby promoting a DNA damage response via replication protein A (rpa2)-binding to ssDNA and the recruitment of a checkpoint protein complex, including atr, atr-interacting protein atrip, and rad9, to damage sites following oxidative stress. Plays a role in reversing blocked 3' DNA ends, problematic lesions that preclude DNA synthesis. Required for chek1 phosphorylation induced by hydrogen peroxide but not by stalled replication forks. This Xenopus laevis (African clawed frog) protein is DNA-(apurinic or apyrimidinic site) endonuclease 2.